The sequence spans 245 residues: 1-(5-phosphoribosyl)-5-[(5-phosphoribosylamino)methylideneamino] imidazole-4-carboxamide isomerase (245 aa).

The active-site Proton acceptor is Asp-8. Residue Asp-130 is the Proton donor of the active site.

It belongs to the HisA/HisF family.

It localises to the cytoplasm. It carries out the reaction 1-(5-phospho-beta-D-ribosyl)-5-[(5-phospho-beta-D-ribosylamino)methylideneamino]imidazole-4-carboxamide = 5-[(5-phospho-1-deoxy-D-ribulos-1-ylimino)methylamino]-1-(5-phospho-beta-D-ribosyl)imidazole-4-carboxamide. Its pathway is amino-acid biosynthesis; L-histidine biosynthesis; L-histidine from 5-phospho-alpha-D-ribose 1-diphosphate: step 4/9. This Pseudomonas putida (strain ATCC 47054 / DSM 6125 / CFBP 8728 / NCIMB 11950 / KT2440) protein is 1-(5-phosphoribosyl)-5-[(5-phosphoribosylamino)methylideneamino] imidazole-4-carboxamide isomerase.